Reading from the N-terminus, the 413-residue chain is Putative F-box protein At3g58820 (413 aa).

The region spanning 1–48 is the F-box domain; it reads MDGVSSLPNELLCHILSFLTTKEAALTSILSKRWRNLIAFVPNLYIDD.

This chain is Putative F-box protein At3g58820, found in Arabidopsis thaliana (Mouse-ear cress).